The following is a 795-amino-acid chain: Phenylalanine--tRNA ligase beta subunit (795 aa).

In terms of domain architecture, tRNA-binding spans Ser39–Arg149. One can recognise a B5 domain in the interval Pro402–Asn477. Mg(2+) is bound by residues Asp455, Asp461, Glu464, and Glu465. The FDX-ACB domain maps to Ser701–Arg794.

It belongs to the phenylalanyl-tRNA synthetase beta subunit family. Type 1 subfamily. In terms of assembly, tetramer of two alpha and two beta subunits. Mg(2+) serves as cofactor.

The protein resides in the cytoplasm. The enzyme catalyses tRNA(Phe) + L-phenylalanine + ATP = L-phenylalanyl-tRNA(Phe) + AMP + diphosphate + H(+). This is Phenylalanine--tRNA ligase beta subunit from Haemophilus ducreyi (strain 35000HP / ATCC 700724).